Consider the following 155-residue polypeptide: Small ribosomal subunit protein uS7c (155 aa).

The protein belongs to the universal ribosomal protein uS7 family. As to quaternary structure, part of the 30S ribosomal subunit.

Its subcellular location is the plastid. The protein localises to the chloroplast. One of the primary rRNA binding proteins, it binds directly to 16S rRNA where it nucleates assembly of the head domain of the 30S subunit. The protein is Small ribosomal subunit protein uS7c (rps7) of Yucca glauca (Soapweed yucca).